The chain runs to 732 residues: Prolyl tripeptidyl peptidase (732 aa).

Positions 1–24 (MKKTIFQQLFLSVCALTVALPCSA) are cleaved as a signal peptide. Catalysis depends on charge relay system residues Ser-603, Asp-678, and His-710.

Belongs to the peptidase S9B family. Post-translationally, the N-terminus is blocked.

The catalysed reaction is Hydrolysis of Xaa-Xaa-Pro-|-Yaa- releasing the N-terminal tripeptide of a peptide with Pro as the third residue (position P1) and where Yaa is not proline.. Its activity is regulated as follows. Strongly inhibited by diisopropyl fluorophosphate and Pefabloc. Weakly inhibited by 3,4-dichloroisocumarin. Not inhibited by phenylmethylsulfonyl fluoride, leupeptin, antipain or prolinal. Activated by iodoacetamide. Serine proteinase. Releases tripeptides from the free amino terminus of proteins. Has a requirement for Pro in the P1 position, but is inactivated by Pro in the P1' position. This chain is Prolyl tripeptidyl peptidase, found in Porphyromonas gingivalis (strain ATCC BAA-308 / W83).